The sequence spans 855 residues: MDLYCQKCYKQLELDDSLLDIDQSLFLKTNIHEIIEELEELSLKPVPKERETLILKQQQQQLLQQQEQAAAAAAIQSPQTVSKMSKLKSGLFGKRKELTQSNSTTPTTPATPTATPTSSSLSLPTPPPLPQQQQQQQQQQQQTFNDQSKLTATTPTQPTPIEEKKQQSFKTFYPAAHSNNSSNGSDHGGNVNTTGVSPSSPGGGAHSFGSLSQHRLSSSLSLKSISSGGGNSSSNLVADINNNNNSVNKDNNTTISSSTVTTSNSISESNNQDSKLLVATTTTTTTTTTTTILATIPTTTTTSTPTTPSTVGGTTPSPPSSSSSSSSSSSVITSPISRISPSNITSPSKLSQQSTPRQRPLTIAPTKLNISQVSSPQKPRLKYLRTSSKSLSMASLPAVGPDGTIIVDGGASSGTESTSMTNHHSSFLNQSTLPLGSSPVQTTPPLLSNSMNNSTNNLQSLQQQQQQQQQQQQQPISENNYYKYMKGLSLFKIATDLINYDLPLCLECTKLTIGELEDEGSILDGEVSIYSAYLKQLEKGKTEEDLEELGKEMTLLCEEEEQLRLMIENTHQERKEVEQLTLQLQDRIATLKSLEDSYWSCFSEFHYETFRNKDERDQTTVQIQWVNDHLESLKQTNILNDAFHLWHDGHFGTINSLRLGKLPSQPVEWNEINAAWGLAVSLLDAMAKKLKFKFQQFTLVPNGSCSRVDKRDVDPPLAYELYGTNDISLGRLFWYRRFDNGMIAFLQCIKELCEHITEKDPEFSVPYKIDKEYIGGMCIKLQFTNDDTWTKSLKFMLTNLKWILIWIVKNETLTLFNNQQFQQSKLNNNQNNNNINNNNNNNINNNNNNNVNKRN.

Disordered stretches follow at residues 92-212 (FGKR…GSLS), 236-271 (LVAD…ESNN), 294-380 (ATIP…QKPR), and 407-475 (VDGG…QQQP). Low complexity-rich tracts occupy residues 99–123 (TQSN…SLSL) and 131–143 (QQQQ…QQQT). The segment covering 144–156 (FNDQSKLTATTPT) has biased composition (polar residues). Residues 177–200 (HSNNSSNGSDHGGNVNTTGVSPSS) are compositionally biased toward low complexity. The segment covering 294-348 (ATIPTTTTTSTPTTPSTVGGTTPSPPSSSSSSSSSSSVITSPISRISPSNITSPS) has biased composition (low complexity). 2 stretches are compositionally biased toward polar residues: residues 368-377 (LNISQVSSPQ) and 413-445 (SGTE…TTPP). Low complexity predominate over residues 446–474 (LLSNSMNNSTNNLQSLQQQQQQQQQQQQQ). A coiled-coil region spans residues 538 to 595 (EKGKTEEDLEELGKEMTLLCEEEEQLRLMIENTHQERKEVEQLTLQLQDRIATLKSLE). The tract at residues 826–855 (LNNNQNNNNINNNNNNNINNNNNNNVNKRN) is disordered.

This sequence belongs to the beclin family.

The protein localises to the endosome membrane. Involved in autophagy. May be required to recruit the atg8-phosphatidylinositol conjugate and the atg12-atg5 conjugate to the pre-autophagosomal structure. The sequence is that of Beclin-1-like protein B (atg6B) from Dictyostelium discoideum (Social amoeba).